The primary structure comprises 160 residues: Transcriptional repressor NrdR (160 aa).

A zinc finger spans residues 3-34 (CPFCGAEDTSVVDSRVSEEGSRIRRRRQCTAC). Residues 49 to 139 (PQIIKQGGNR…VYRSFEDVGD (91 aa)) enclose the ATP-cone domain.

It belongs to the NrdR family. It depends on Zn(2+) as a cofactor.

In terms of biological role, negatively regulates transcription of bacterial ribonucleotide reductase nrd genes and operons by binding to NrdR-boxes. The chain is Transcriptional repressor NrdR from Nitrosomonas eutropha (strain DSM 101675 / C91 / Nm57).